Reading from the N-terminus, the 309-residue chain is Eugenol synthase 2 (309 aa).

NADP(+) is bound by residues 13–16 (TGYI), 35–45 (VRETTVSDPVK), R36, 86–88 (FMQ), 111–113 (SEF), K134, and 154–156 (NCF). K134 (proton donor/acceptor) is an active-site residue.

Belongs to the NmrA-type oxidoreductase family. In terms of tissue distribution, mostly expressed in petals, and, to a lower extent, in sepals, stamens and pistils.

It carries out the reaction eugenol + a carboxylate + NADP(+) = a coniferyl ester + NADPH. The catalysed reaction is eugenol + acetate + NADP(+) = (E)-coniferyl acetate + NADPH. The protein operates within aromatic compound metabolism; phenylpropanoid biosynthesis. Functionally, catalyzes the synthesis of the phenylpropene eugenol from coniferyl acetate. Phenylpropenes are produced by plants as defense compounds with antimicrobial and antianimal properties, or as floral attractants of pollinators. The protein is Eugenol synthase 2 of Clarkia breweri (Fairy fans).